The sequence spans 273 residues: Non-homologous end joining protein Ku (273 aa).

The region spanning 10–193 (AFGLVNVPVK…KVEIKPAELK (184 aa)) is the Ku domain. Positions 111 to 273 (FLEPDSKSSK…KANSNVPTPP (163 aa)) are sufficient for interaction with LigD.

The protein belongs to the prokaryotic Ku family. As to quaternary structure, homodimer. Interacts with LigD.

Functionally, with LigD forms a non-homologous end joining (NHEJ) DNA repair enzyme, which repairs dsDNA breaks with reduced fidelity. Binds linear dsDNA with 5'- and 3'- overhangs but not closed circular dsDNA nor ssDNA. Recruits and stimulates the ligase activity of LigD. This Mycobacterium tuberculosis (strain CDC 1551 / Oshkosh) protein is Non-homologous end joining protein Ku (mku).